The sequence spans 80 residues: MFPLVKNALNRLQVRSIQQTMARQSHQKRTPDFHDKYGNAVLASGATFCIVTWTYVATQVGIEWNLSPVGRVTPKEWRNQ.

The N-terminal 24 residues, 1-24 (MFPLVKNALNRLQVRSIQQTMARQ), are a transit peptide targeting the mitochondrion. Topologically, residues 25 to 32 (SHQKRTPD) are mitochondrial matrix. Residues 33-59 (FHDKYGNAVLASGATFCIVTWTYVATQ) traverse the membrane as a helical segment. The Mitochondrial intermembrane segment spans residues 60-80 (VGIEWNLSPVGRVTPKEWRNQ).

Belongs to the cytochrome c oxidase VIIb family. As to quaternary structure, component of the cytochrome c oxidase (complex IV, CIV), a multisubunit enzyme composed of 14 subunits. The complex is composed of a catalytic core of 3 subunits MT-CO1, MT-CO2 and MT-CO3, encoded in the mitochondrial DNA, and 11 supernumerary subunits COX4I, COX5A, COX5B, COX6A, COX6B, COX6C, COX7A, COX7B, COX7C, COX8 and NDUFA4, which are encoded in the nuclear genome. The complex exists as a monomer or a dimer and forms supercomplexes (SCs) in the inner mitochondrial membrane with NADH-ubiquinone oxidoreductase (complex I, CI) and ubiquinol-cytochrome c oxidoreductase (cytochrome b-c1 complex, complex III, CIII), resulting in different assemblies (supercomplex SCI(1)III(2)IV(1) and megacomplex MCI(2)III(2)IV(2)).

Its subcellular location is the mitochondrion inner membrane. Its pathway is energy metabolism; oxidative phosphorylation. Functionally, component of the cytochrome c oxidase, the last enzyme in the mitochondrial electron transport chain which drives oxidative phosphorylation. The respiratory chain contains 3 multisubunit complexes succinate dehydrogenase (complex II, CII), ubiquinol-cytochrome c oxidoreductase (cytochrome b-c1 complex, complex III, CIII) and cytochrome c oxidase (complex IV, CIV), that cooperate to transfer electrons derived from NADH and succinate to molecular oxygen, creating an electrochemical gradient over the inner membrane that drives transmembrane transport and the ATP synthase. Cytochrome c oxidase is the component of the respiratory chain that catalyzes the reduction of oxygen to water. Electrons originating from reduced cytochrome c in the intermembrane space (IMS) are transferred via the dinuclear copper A center (CU(A)) of subunit 2 and heme A of subunit 1 to the active site in subunit 1, a binuclear center (BNC) formed by heme A3 and copper B (CU(B)). The BNC reduces molecular oxygen to 2 water molecules using 4 electrons from cytochrome c in the IMS and 4 protons from the mitochondrial matrix. Plays a role in proper central nervous system (CNS) development in vertebrates. The sequence is that of Cytochrome c oxidase subunit 7B, mitochondrial (COX7B) from Pongo abelii (Sumatran orangutan).